Reading from the N-terminus, the 161-residue chain is Cytochrome c-type biogenesis protein CcmE (161 aa).

The Cytoplasmic segment spans residues Met-1–Arg-8. Residues Leu-9 to Ala-29 form a helical; Signal-anchor for type II membrane protein membrane-spanning segment. Residues Leu-30–Glu-161 lie on the Periplasmic side of the membrane. Positions 129 and 133 each coordinate heme. The segment at Met-142 to Glu-161 is disordered. Polar residues predominate over residues Gln-150–Glu-161.

It belongs to the CcmE/CycJ family.

The protein resides in the cell inner membrane. Its function is as follows. Heme chaperone required for the biogenesis of c-type cytochromes. Transiently binds heme delivered by CcmC and transfers the heme to apo-cytochromes in a process facilitated by CcmF and CcmH. This chain is Cytochrome c-type biogenesis protein CcmE, found in Vibrio parahaemolyticus serotype O3:K6 (strain RIMD 2210633).